The sequence spans 213 residues: NADH-quinone oxidoreductase subunit I (213 aa).

4Fe-4S ferredoxin-type domains are found at residues 74 to 103 and 113 to 142; these read RFIE…METS and GNYS…HGIE. Residues Cys-83, Cys-86, Cys-89, Cys-93, Cys-122, Cys-125, Cys-128, and Cys-132 each contribute to the [4Fe-4S] cluster site.

The protein belongs to the complex I 23 kDa subunit family. In terms of assembly, NDH-1 is composed of 14 different subunits. Subunits NuoA, H, J, K, L, M, N constitute the membrane sector of the complex. [4Fe-4S] cluster is required as a cofactor.

It is found in the cell inner membrane. The enzyme catalyses a quinone + NADH + 5 H(+)(in) = a quinol + NAD(+) + 4 H(+)(out). In terms of biological role, NDH-1 shuttles electrons from NADH, via FMN and iron-sulfur (Fe-S) centers, to quinones in the respiratory chain. The immediate electron acceptor for the enzyme in this species is believed to be ubiquinone. Couples the redox reaction to proton translocation (for every two electrons transferred, four hydrogen ions are translocated across the cytoplasmic membrane), and thus conserves the redox energy in a proton gradient. This Campylobacter jejuni subsp. doylei (strain ATCC BAA-1458 / RM4099 / 269.97) protein is NADH-quinone oxidoreductase subunit I.